The primary structure comprises 330 residues: 3',5'-cyclic-nucleotide phosphodiesterase (330 aa).

Positions 1 to 22 (MFKNKLAVLFTCLSVFSFSAQS) are cleaved as a signal peptide.

Belongs to the cyclic nucleotide phosphodiesterase class-II family.

The protein resides in the periplasm. The enzyme catalyses a nucleoside 3',5'-cyclic phosphate + H2O = a nucleoside 5'-phosphate + H(+). Functionally, seems to allow the organism to grow on cAMP. In Aliivibrio fischeri (Vibrio fischeri), this protein is 3',5'-cyclic-nucleotide phosphodiesterase (cpdP).